Reading from the N-terminus, the 520-residue chain is MAISNKQKAAIAAIVLVGGVATGGVLLSGRSAPEEQGGHSESKGHGDTEHHGKQAAEADHKDDKSHGDGEHHEVKKGPNGGALFSRDGYDVEIGTAESKGEARIRLWVSKSGKAVANGVAATGQLVRATGESQALKFVVSGDALESQQPVAEPHVFDVTANVTLPGSSSPLAVRLSKEEGKIELTADQLAKTGVVVQTAGSAKVQAGVQFPGEIRFNEDKTAHVVPRLAGVVESVPANIGQQVKKGQVLAVIASTGLSDQRSELLAAQKRLDLARVTYDREKKLWEQKISADEDYLSARNALQEAQISVQNAQQKLTAIGASNSSTALNRYELRAPFAGMIVEKHISLGEAVADNANVFTLSDLSSVWAEFVVSAKDVERVRIGEKASINSASSDVKADGTVSYVGSLLGEQTRTAKARVTLTNPQMAWRPGLFVTVDVFGADVEVPVAVKTEAVQDVNGESVVFVAVQGGFVPQPVKVGRTNGKVIEIVEGLKPGARYAAANSFVLKAELGKSSAEHGH.

The segment at 28-85 (SGRSAPEEQGGHSESKGHGDTEHHGKQAAEADHKDDKSHGDGEHHEVKKGPNGGALFS) is disordered. The segment covering 32–76 (APEEQGGHSESKGHGDTEHHGKQAAEADHKDDKSHGDGEHHEVKK) has biased composition (basic and acidic residues).

The protein belongs to the membrane fusion protein (MFP) (TC 8.A.1) family.

Its function is as follows. CzcA and CzcB together would act in zinc efflux nearly as effectively as the complete czc efflux system (CzcABC). The CzcB protein is thought to funnel zinc cations to the CzcA transport protein. The polypeptide is Cation efflux system protein CzcB (czcB) (Alcaligenes sp. (strain CT14)).